A 110-amino-acid chain; its full sequence is MTTVHSIADPCDPEVSPTNNRHLTVSYASRYPDYTRIPALTMKGQWLEAAGFATGTEVDVRVMNGCIVLTAQQPQPEESELMQSLRQACKLSARKQKQVQAFISVMAGSK.

Positions 29–74 (SRYPDYTRIPALTMKGQWLEAAGFATGTEVDVRVMNGCIVLTAQQP) constitute a SpoVT-AbrB domain.

This sequence belongs to the SymE family.

Its subcellular location is the cytoplasm. Functionally, involved in the degradation and recycling of damaged RNA. It is itself a target for degradation by the ATP-dependent protease Lon. The sequence is that of Endoribonuclease SymE from Salmonella typhi.